Consider the following 919-residue polypeptide: Bifunctional uridylyltransferase/uridylyl-removing enzyme (919 aa).

Residues 1–373 (MTDPKVPRQR…LAGFNAKSRM (373 aa)) are uridylyltransferase. The segment at 374–727 (LKGYTVFGGK…CEFDEERGAT (354 aa)) is uridylyl-removing. In terms of domain architecture, HD spans 489-611 (VDEHTIRAIG…VQSLERLRHL (123 aa)). 2 ACT domains span residues 728–811 (LVTV…LAKR) and 839–919 (VIEV…LEPA).

It belongs to the GlnD family. Requires Mg(2+) as cofactor.

It catalyses the reaction [protein-PII]-L-tyrosine + UTP = [protein-PII]-uridylyl-L-tyrosine + diphosphate. The catalysed reaction is [protein-PII]-uridylyl-L-tyrosine + H2O = [protein-PII]-L-tyrosine + UMP + H(+). Its activity is regulated as follows. Uridylyltransferase (UTase) activity is inhibited by glutamine, while glutamine activates uridylyl-removing (UR) activity. Functionally, modifies, by uridylylation and deuridylylation, the PII regulatory proteins (GlnB and homologs), in response to the nitrogen status of the cell that GlnD senses through the glutamine level. Under low glutamine levels, catalyzes the conversion of the PII proteins and UTP to PII-UMP and PPi, while under higher glutamine levels, GlnD hydrolyzes PII-UMP to PII and UMP (deuridylylation). Thus, controls uridylylation state and activity of the PII proteins, and plays an important role in the regulation of nitrogen assimilation and metabolism. This chain is Bifunctional uridylyltransferase/uridylyl-removing enzyme, found in Erythrobacter litoralis (strain HTCC2594).